A 653-amino-acid polypeptide reads, in one-letter code: E3 ubiquitin-protein ligase TRIM32 (653 aa).

Ala-2 bears the N-acetylalanine mark. The RING-type zinc-finger motif lies at 20-65 (CPICMESFTEEQLRPKLLHCGHTICRQCLEKLLASSINGVRCPFCS). At Ser-55 the chain carries Phosphoserine; by CHEK2. Cys-100, Cys-103, Cys-123, and His-128 together coordinate Zn(2+). Residues 103–133 (CGRRLPRQFCRSCGLVLCEPCREADHQPPGH) form a B box-type zinc finger. The stretch at 138–197 (VKEAAEERRRDFGEKLTRLRELMGELQRRKAALEGVSKDLQARYKAVLQEYGHEERRVQD) forms a coiled coil. Residues Ser-328, Ser-335, and Ser-339 each carry the phosphoserine modification. NHL repeat units follow at residues 358-401 (LKKM…FTRK), 415-458 (DSFV…YTLD), 459-499 (GHCV…FTVD), 562-605 (GRQI…FPKG), and 606-646 (GGYS…YSYH).

Belongs to the TRIM/RBCC family. In terms of assembly, it self-associates. Interacts with DTNBP1. Interacts with PIAS4/PIASY upon treatment with UVB and TNF-alpha. Interacts with AMBRA1; promoting activation of ULK1 through unanchored 'Lys-63'-linked polyubiquitin chains. Interacts with TICAM1 and TAX1BP1; these interactions target TICAM1 to TAX1BP1-mediated selective autophagic degradation. As to quaternary structure, (Microbial infection) Interacts with S.typhimurium protein SseK3; SseK3 does not glycosylate TRIM32. Post-translationally, ubiquitinated. Phosphorylation at Ser-55 by CHEK2 under oxidative stress, activates the E3 ligase activity and promotes ATG7 ubiquitination leading to positive regulation of the autophagosme assembly. Spleen, thymus, prostate, testis, ovary, intestine, colon and skeletal muscle.

Its subcellular location is the cytoplasm. The protein resides in the mitochondrion. It localises to the endoplasmic reticulum. The catalysed reaction is S-ubiquitinyl-[E2 ubiquitin-conjugating enzyme]-L-cysteine + [acceptor protein]-L-lysine = [E2 ubiquitin-conjugating enzyme]-L-cysteine + N(6)-ubiquitinyl-[acceptor protein]-L-lysine.. It functions in the pathway protein modification; protein ubiquitination. E3 ubiquitin ligase that plays a role in various biological processes including neural stem cell differentiation, innate immunity, inflammatory resonse and autophagy. Plays a role in virus-triggered induction of IFN-beta and TNF-alpha by mediating the ubiquitination of STING1. Mechanistically, targets STING1 for 'Lys-63'-linked ubiquitination which promotes the interaction of STING1 with TBK1. Regulates bacterial clearance and promotes autophagy in Mycobacterium tuberculosis-infected macrophages. Negatively regulates TLR3/4-mediated innate immune and inflammatory response by triggering the autophagic degradation of TICAM1 in an E3 activity-independent manner. Plays an essential role in oxidative stress induced cell death by inducing loss of transmembrane potential and enhancing mitochondrial reactive oxygen species (ROS) production during oxidative stress conditions. Ubiquitinates XIAP and targets it for proteasomal degradation. Ubiquitinates DTNBP1 (dysbindin) and promotes its degradation. May ubiquitinate BBS2. Ubiquitinates PIAS4/PIASY and promotes its degradation in keratinocytes treated with UVB and TNF-alpha. Also acts as a regulator of autophagy by mediating formation of unanchored 'Lys-63'-linked polyubiquitin chains that activate ULK1: interaction with AMBRA1 is required for ULK1 activation. Positively regulates dendritic branching by promoting ubiquitination and subsequent degradation of the epigenetic factor CDYL. Under metabolic stress and phosphorylation by CHK2, mediates 'Lys-63'-linked ubiquitination of ATG7 at 'Lys-45' to initiate autophagy. In terms of biological role, (Microbial infection) May play a significant role in mediating the biological activity of the HIV-1 Tat protein in vivo. Binds specifically to the activation domain of HIV-1 Tat and can also interact with the HIV-2 and EIAV Tat proteins in vivo. This is E3 ubiquitin-protein ligase TRIM32 from Homo sapiens (Human).